The following is a 376-amino-acid chain: 2-aminoethylphosphonate--pyruvate transaminase 2 (376 aa).

K194 is subject to N6-(pyridoxal phosphate)lysine.

The protein belongs to the class-V pyridoxal-phosphate-dependent aminotransferase family. PhnW subfamily. As to quaternary structure, homodimer. The cofactor is pyridoxal 5'-phosphate.

The catalysed reaction is (2-aminoethyl)phosphonate + pyruvate = phosphonoacetaldehyde + L-alanine. Functionally, involved in phosphonate degradation. This Burkholderia lata (strain ATCC 17760 / DSM 23089 / LMG 22485 / NCIMB 9086 / R18194 / 383) protein is 2-aminoethylphosphonate--pyruvate transaminase 2.